The following is a 155-amino-acid chain: Ribosomal RNA large subunit methyltransferase H (155 aa).

S-adenosyl-L-methionine contacts are provided by residues leucine 72, glycine 103, and 122-127; that span reads LSTMTL.

The protein belongs to the RNA methyltransferase RlmH family. In terms of assembly, homodimer.

It is found in the cytoplasm. It carries out the reaction pseudouridine(1915) in 23S rRNA + S-adenosyl-L-methionine = N(3)-methylpseudouridine(1915) in 23S rRNA + S-adenosyl-L-homocysteine + H(+). Functionally, specifically methylates the pseudouridine at position 1915 (m3Psi1915) in 23S rRNA. The sequence is that of Ribosomal RNA large subunit methyltransferase H from Nitrosomonas eutropha (strain DSM 101675 / C91 / Nm57).